The sequence spans 251 residues: Flap endonuclease Xni (251 aa).

Aspartate 104 is a Mg(2+) binding site. The 5'-3' exonuclease domain occupies 160–249 (VLPRQLPDYW…IDGNLQQLRL (90 aa)). The K(+) site is built by leucine 171, alanine 172, proline 180, valine 182, and isoleucine 185. Residues 184-189 (GIGPKS) are interaction with DNA.

The protein belongs to the Xni family. Mg(2+) serves as cofactor. K(+) is required as a cofactor.

Its function is as follows. Has flap endonuclease activity. During DNA replication, flap endonucleases cleave the 5'-overhanging flap structure that is generated by displacement synthesis when DNA polymerase encounters the 5'-end of a downstream Okazaki fragment. This is Flap endonuclease Xni from Salmonella heidelberg (strain SL476).